A 203-amino-acid chain; its full sequence is Cytochrome c oxidase assembly protein CtaG (203 aa).

The Cytoplasmic portion of the chain corresponds to 1-16 (MADQQEKDQKLKKQQR). Residues 17–39 (SNATIAFACLSFFVCMIGAAYAS) traverse the membrane as a helical; Signal-anchor for type II membrane protein segment. Residues 40 to 203 (VPLYRIFCQV…VKAETPTNGS (164 aa)) are Periplasmic-facing.

Belongs to the COX11/CtaG family.

It localises to the cell inner membrane. Exerts its effect at some terminal stage of cytochrome c oxidase synthesis, probably by being involved in the insertion of the copper B into subunit I. This Brucella anthropi (strain ATCC 49188 / DSM 6882 / CCUG 24695 / JCM 21032 / LMG 3331 / NBRC 15819 / NCTC 12168 / Alc 37) (Ochrobactrum anthropi) protein is Cytochrome c oxidase assembly protein CtaG.